The chain runs to 384 residues: Beta-ureidopropionase (384 aa).

In terms of domain architecture, CN hydrolase spans 72–344; the sequence is VHVGLVQNRI…DGLLVAKLDL (273 aa). The active-site Proton acceptor is Glu-119. Lys-196 functions as the Proton donor in the catalytic mechanism. The active-site Nucleophile is Cys-233. Position 378 is a phosphoserine (Ser-378).

The protein belongs to the carbon-nitrogen hydrolase superfamily. BUP family. In terms of assembly, homodimer, homotetramer, homooctamer; can also form higher homooligomers. Detected in liver (at protein level).

It is found in the cytoplasm. The enzyme catalyses 3-(carbamoylamino)propanoate + H2O + 2 H(+) = beta-alanine + NH4(+) + CO2. It catalyses the reaction 3-(carbamoylamino)-2-methylpropanoate + H2O + 2 H(+) = (R)-3-amino-2-methylpropanoate + NH4(+) + CO2. The protein operates within amino-acid biosynthesis; beta-alanine biosynthesis. With respect to regulation, strongly inhibited by 50 mM Zn(2+). Not inhibited by EDTA. Competitively inhibited by beta-alanine, 5-aminolevulinic acid (ALA), beta-aminoisobutyrate and 4-ureidobutyrate. In terms of biological role, catalyzes a late step in pyrimidine degradation. Converts N-carbamoyl-beta-alanine (3-ureidopropanoate) into beta-alanine, ammonia and carbon dioxide. Likewise, converts N-carbamoyl-beta-aminoisobutyrate (3-ureidoisobutyrate) into beta-aminoisobutyrate, ammonia and carbon dioxide. This is Beta-ureidopropionase (UPB1) from Homo sapiens (Human).